The chain runs to 78 residues: Large ribosomal subunit protein bL28 (78 aa).

This sequence belongs to the bacterial ribosomal protein bL28 family.

The protein is Large ribosomal subunit protein bL28 of Methylococcus capsulatus (strain ATCC 33009 / NCIMB 11132 / Bath).